A 117-amino-acid polypeptide reads, in one-letter code: B-enzyme (117 aa).

Residue Asp-89 is part of the active site.

The enzyme catalyses Hydrolysis of (1-&gt;4)-beta-linkages between N-acetylmuramic acid and N-acetyl-D-glucosamine residues in a peptidoglycan and between N-acetyl-D-glucosamine residues in chitodextrins.. The chain is B-enzyme (lyzB) from Bacillus subtilis.